The following is a 1164-amino-acid chain: DNA-directed RNA polymerase 133 kDa polypeptide (1164 aa).

Belongs to the RNA polymerase beta chain family. As to quaternary structure, the DNA-dependent RNA polymerase used for intermediate and late genes expression consists of eight subunits 147 kDa, 133 kDa, 35 kDa, 30 kDa, 22 kDa, 19 kDa, 18 kDa and 7 kDa totalling more than 500 kDa in mass. The same holoenzyme, with the addition of the transcription-specificity factor RAP94, is used for early gene expression.

It is found in the virion. The enzyme catalyses RNA(n) + a ribonucleoside 5'-triphosphate = RNA(n+1) + diphosphate. Part of the DNA-dependent RNA polymerase which catalyzes the transcription of viral DNA into RNA using the four ribonucleoside triphosphates as substrates. Responsible for the transcription of early, intermediate and late genes. DNA-dependent RNA polymerase associates with the early transcription factor (ETF), itself composed of D6 and A7, thereby allowing the early genes transcription. Late transcription, and probably also intermediate transcription, require newly synthesized RNA polymerase. The protein is DNA-directed RNA polymerase 133 kDa polypeptide (RPO132) of Homo sapiens (Human).